Reading from the N-terminus, the 122-residue chain is Flagellar protein FliT (122 aa).

Residues 1-50 (MTSTVEFINRWQRIALLSQSLLELAQRGEWDLLLQQEVSYLQSIETVMEK) form a required for homodimerization region. Residues 60-98 (IQDMVAGYIKQTLDNEQLLKGLLQQRLDELSSLIGQSTR) form a fliD binding region.

It belongs to the FliT family. As to quaternary structure, homodimer. Interacts with FliD and FlhC.

The protein localises to the cytoplasm. It localises to the cytosol. In terms of biological role, dual-function protein that regulates the transcription of class 2 flagellar operons and that also acts as an export chaperone for the filament-capping protein FliD. As a transcriptional regulator, acts as an anti-FlhDC factor; it directly binds FlhC, thus inhibiting the binding of the FlhC/FlhD complex to class 2 promoters, resulting in decreased expression of class 2 flagellar operons. As a chaperone, effects FliD transition to the membrane by preventing its premature polymerization, and by directing it to the export apparatus. The sequence is that of Flagellar protein FliT from Salmonella schwarzengrund (strain CVM19633).